We begin with the raw amino-acid sequence, 75 residues long: Small ribosomal subunit protein bS18 (75 aa).

This sequence belongs to the bacterial ribosomal protein bS18 family. In terms of assembly, part of the 30S ribosomal subunit. Forms a tight heterodimer with protein bS6.

Its function is as follows. Binds as a heterodimer with protein bS6 to the central domain of the 16S rRNA, where it helps stabilize the platform of the 30S subunit. The polypeptide is Small ribosomal subunit protein bS18 (Hydrogenovibrio crunogenus (strain DSM 25203 / XCL-2) (Thiomicrospira crunogena)).